A 345-amino-acid polypeptide reads, in one-letter code: Achaete-scute complex protein T4 (345 aa).

Over residues 78-92 the composition is skewed to low complexity; it reads SESVSSLSPGSSPAP. Positions 78–109 are disordered; the sequence is SESVSSLSPGSSPAPYNVDQSQSVQRRNARER. A bHLH domain is found at 99–162; it reads QSVQRRNARE…RIAVEYIRRL (64 aa).

As to quaternary structure, efficient DNA binding requires dimerization with another bHLH protein. Interacts with da (via bHLH motif). Interacts with Bap60. As to expression, l(1)SC, SC and AC strongly label the presumptive stomatogastric nervous system, while ASE is more prominent in the presumptive procephalic lobe. Associates with the somatic nuclei through nuclear cycles 9 and 10. During nuclear cycle 11 distributes uniformly in the embryo.

In terms of biological role, AS-C proteins are involved in the determination of the neuronal precursors in the peripheral nervous system and the central nervous system. Also involved in sex determination and dosage compensation. This chain is Achaete-scute complex protein T4 (sc), found in Drosophila melanogaster (Fruit fly).